A 278-amino-acid chain; its full sequence is HTH-type transcriptional regulator HdfR (278 aa).

One can recognise an HTH lysR-type domain in the interval 1 to 58 (MDTELLKTFLEVSRTRHFGRAAEALYLTQSAVSFRIRQLENQLGVNLFTRHRNNIRLT). The segment at residues 18 to 37 (FGRAAEALYLTQSAVSFRIR) is a DNA-binding region (H-T-H motif).

Belongs to the LysR transcriptional regulatory family.

In terms of biological role, negatively regulates the transcription of the flagellar master operon flhDC by binding to the upstream region of the operon. In Salmonella agona (strain SL483), this protein is HTH-type transcriptional regulator HdfR.